Consider the following 448-residue polypeptide: Solute carrier family 52, riboflavin transporter, member 2 (448 aa).

Transmembrane regions (helical) follow at residues 14–34 (LLVA…WVEL), 47–67 (LPSY…VVTL), 79–99 (VPIQ…APLW), 105–125 (VAGQ…ALAC), and 147–167 (FFLG…VQGV). N-linked (GlcNAc...) asparagine glycosylation is present at Asn-178. Residues 198 to 218 (WALTALLVTSAAAFQGLLLLL) form a helical membrane-spanning segment. Residues 228-267 (GAGPELPLGSPGAEEEEKEEEEALPLQEPPSQAAGTIPGP) form a disordered region. Acidic residues predominate over residues 240 to 250 (AEEEEKEEEEA). The next 5 membrane-spanning stretches (helical) occupy residues 280–300 (AFLL…LPAV), 315–335 (LAVV…MGVL), 342–362 (LVGL…LAIL), 369–389 (VGTT…LCVF), and 407–427 (ALLA…GTMF).

This sequence belongs to the riboflavin transporter family.

The protein localises to the cell membrane. The catalysed reaction is riboflavin(in) = riboflavin(out). With respect to regulation, riboflavin transport is Na(+)-independent but moderately pH-sensitive. Activity is strongly inhibited by riboflavin analogs, such as lumiflavin. Weakly inhibited by flavin adenine dinucleotide (FAD) and flavin mononucleotide (FMN). Plasma membrane transporter mediating the uptake by cells of the water soluble vitamin B2/riboflavin that plays a key role in biochemical oxidation-reduction reactions of the carbohydrate, lipid, and amino acid metabolism. May also act as a receptor for 4-hydroxybutyrate. Its function is as follows. (Microbial infection) In case of infection by retroviruses, acts as a cell receptor to retroviral envelopes similar to the porcine endogenous retrovirus (PERV-A). This Papio hamadryas (Hamadryas baboon) protein is Solute carrier family 52, riboflavin transporter, member 2 (SLC52A2).